An 890-amino-acid polypeptide reads, in one-letter code: Alanine--tRNA ligase (890 aa).

Positions 564, 568, 677, and 681 each coordinate Zn(2+).

This sequence belongs to the class-II aminoacyl-tRNA synthetase family. The cofactor is Zn(2+).

It localises to the cytoplasm. It catalyses the reaction tRNA(Ala) + L-alanine + ATP = L-alanyl-tRNA(Ala) + AMP + diphosphate. In terms of biological role, catalyzes the attachment of alanine to tRNA(Ala) in a two-step reaction: alanine is first activated by ATP to form Ala-AMP and then transferred to the acceptor end of tRNA(Ala). Also edits incorrectly charged Ser-tRNA(Ala) and Gly-tRNA(Ala) via its editing domain. This Rhodopseudomonas palustris (strain BisB18) protein is Alanine--tRNA ligase.